A 236-amino-acid polypeptide reads, in one-letter code: Orotidine 5'-phosphate decarboxylase (236 aa).

Residues Asp-17, Lys-39, 66–75 (DLKFYDIPNT), Thr-125, Arg-187, Gln-196, Gly-216, and Arg-217 each bind substrate. Residue Lys-68 is the Proton donor of the active site.

This sequence belongs to the OMP decarboxylase family. Type 1 subfamily. Homodimer.

It carries out the reaction orotidine 5'-phosphate + H(+) = UMP + CO2. Its pathway is pyrimidine metabolism; UMP biosynthesis via de novo pathway; UMP from orotate: step 2/2. Catalyzes the decarboxylation of orotidine 5'-monophosphate (OMP) to uridine 5'-monophosphate (UMP). The protein is Orotidine 5'-phosphate decarboxylase of Buchnera aphidicola subsp. Baizongia pistaciae (strain Bp).